The chain runs to 204 residues: Transcription initiation factor TFIID subunit 11b (204 aa).

Residues 38-60 (PFEAAMEEQEESPVETEQTLEGD) are disordered. The span at 42-58 (AMEEQEESPVETEQTLE) shows a compositional bias: acidic residues. Residues 106-195 (FTEEQMSRYE…RRLKLQGKVP (90 aa)) enclose the Histone-fold domain.

Belongs to the TAF11 family. Component of the TFIID complex. TFIID is composed of TATA binding protein (TBP) and a number of TBP-associated factors (TAFs) whose MWs range from 14-217 kDa. As to expression, expressed in roots, leaves and inflorescences.

It is found in the nucleus. Functionally, TAFs are components of the transcription factor IID (TFIID) complex that is essential for mediating regulation of RNA polymerase transcription. The polypeptide is Transcription initiation factor TFIID subunit 11b (TAF11B) (Arabidopsis thaliana (Mouse-ear cress)).